The primary structure comprises 382 residues: Na(+)/H(+) antiporter NhaA (382 aa).

11 helical membrane passes run 14–34 (AGGI…NSSF), 49–69 (MSVS…LIGL), 87–107 (IFPA…YVAF), 117–137 (GWAI…ALLG), 146–166 (VFLL…IAFF), 171–191 (LSVL…LLNS), 205–225 (FILW…GVVL), 247–267 (ALHP…NAGI), 285–305 (VALG…YVAV), 321–341 (IFAV…ISSL), and 356–376 (LGIL…LHIS).

The protein belongs to the NhaA Na(+)/H(+) (TC 2.A.33) antiporter family.

It is found in the cell inner membrane. It carries out the reaction Na(+)(in) + 2 H(+)(out) = Na(+)(out) + 2 H(+)(in). In terms of biological role, na(+)/H(+) antiporter that extrudes sodium in exchange for external protons. In Aliivibrio salmonicida (strain LFI1238) (Vibrio salmonicida (strain LFI1238)), this protein is Na(+)/H(+) antiporter NhaA.